A 274-amino-acid chain; its full sequence is Pre-rRNA-processing protein PNO1 (274 aa).

The interval 1–70 (MVAPTALKKA…GSRKTHESKT (70 aa)) is disordered. The segment covering 33–48 (SIDEDDDDDVLLDDSD) has biased composition (acidic residues). Ser47 bears the Phosphoserine mark. Thr51 bears the Phosphothreonine mark. A compositionally biased stretch (basic and acidic residues) spans 51–69 (TAKEEVEGEEGSRKTHESK). Residues 195–247 (GDHLSRAIGRIAGKDGKTKFAIENATRTRIVLADSKIHILGGFTHIRMARESV) form the KH domain.

Belongs to the PNO1 family. Component of the small ribosomal subunit, ribosomal RNA processing complex (SSU RRP complex). Interacts with NOB1.

It is found in the cytoplasm. The protein resides in the nucleus. Its subcellular location is the nucleolus. Required for small ribosomal subunit (SSU) synthesis. Has a role in the processing of early nucleolar and late cytoplasmic pre-RNA species. Recruits DIM1 to nucleolar pre-RNAs. Indirectly required for cleavage at the A2 site of the 20S pre-rRNA, forming 18S rRNA, and at A1 and A2 sites of other pre-rRNAs. This chain is Pre-rRNA-processing protein PNO1 (PNO1), found in Saccharomyces cerevisiae (strain ATCC 204508 / S288c) (Baker's yeast).